Here is a 284-residue protein sequence, read N- to C-terminus: Bifunctional protein FolD (284 aa).

NADP(+)-binding positions include 166–168 (GSS) and isoleucine 232.

It belongs to the tetrahydrofolate dehydrogenase/cyclohydrolase family. Homodimer.

The enzyme catalyses (6R)-5,10-methylene-5,6,7,8-tetrahydrofolate + NADP(+) = (6R)-5,10-methenyltetrahydrofolate + NADPH. The catalysed reaction is (6R)-5,10-methenyltetrahydrofolate + H2O = (6R)-10-formyltetrahydrofolate + H(+). It participates in one-carbon metabolism; tetrahydrofolate interconversion. Catalyzes the oxidation of 5,10-methylenetetrahydrofolate to 5,10-methenyltetrahydrofolate and then the hydrolysis of 5,10-methenyltetrahydrofolate to 10-formyltetrahydrofolate. This Buchnera aphidicola subsp. Cinara cedri (strain Cc) protein is Bifunctional protein FolD.